The sequence spans 267 residues: Tryptophan synthase alpha chain (267 aa).

Catalysis depends on proton acceptor residues glutamate 49 and aspartate 60.

Belongs to the TrpA family. In terms of assembly, tetramer of two alpha and two beta chains.

The catalysed reaction is (1S,2R)-1-C-(indol-3-yl)glycerol 3-phosphate + L-serine = D-glyceraldehyde 3-phosphate + L-tryptophan + H2O. It functions in the pathway amino-acid biosynthesis; L-tryptophan biosynthesis; L-tryptophan from chorismate: step 5/5. The alpha subunit is responsible for the aldol cleavage of indoleglycerol phosphate to indole and glyceraldehyde 3-phosphate. This chain is Tryptophan synthase alpha chain, found in Salinispora arenicola (strain CNS-205).